We begin with the raw amino-acid sequence, 295 residues long: Protease HtpX (295 aa).

2 helical membrane-spanning segments follow: residues I4–L24 and S41–I61. H147 provides a ligand contact to Zn(2+). E148 is an active-site residue. H151 is a Zn(2+) binding site. 2 consecutive transmembrane segments (helical) span residues V158–I178 and V199–F219. E224 contacts Zn(2+).

This sequence belongs to the peptidase M48B family. It depends on Zn(2+) as a cofactor.

It is found in the cell inner membrane. This Pseudomonas putida (strain ATCC 700007 / DSM 6899 / JCM 31910 / BCRC 17059 / LMG 24140 / F1) protein is Protease HtpX.